A 581-amino-acid chain; its full sequence is Threonine--tRNA ligase (581 aa).

The catalytic stretch occupies residues 185 to 478 (DHRKLGKELD…LIEHYGGAFP (294 aa)). Zn(2+)-binding residues include cysteine 278, histidine 329, and histidine 455.

It belongs to the class-II aminoacyl-tRNA synthetase family. In terms of assembly, homodimer. It depends on Zn(2+) as a cofactor.

Its subcellular location is the cytoplasm. It catalyses the reaction tRNA(Thr) + L-threonine + ATP = L-threonyl-tRNA(Thr) + AMP + diphosphate + H(+). In terms of biological role, catalyzes the attachment of threonine to tRNA(Thr) in a two-step reaction: L-threonine is first activated by ATP to form Thr-AMP and then transferred to the acceptor end of tRNA(Thr). Also edits incorrectly charged L-seryl-tRNA(Thr). This Borreliella afzelii (strain PKo) (Borrelia afzelii) protein is Threonine--tRNA ligase.